The chain runs to 316 residues: Very-long-chain 3-oxooacyl-coA reductase let-767 (316 aa).

NADP(+) is bound by residues 47–76 (ASWAVVTGATDGIGKAYAFELARRGFNVLL) and Asp-106. Ser-189 contributes to the substrate binding site. Tyr-202 serves as the catalytic Proton acceptor. An NADP(+)-binding site is contributed by Lys-206.

This sequence belongs to the short-chain dehydrogenases/reductases (SDR) family. 17-beta-HSD 3 subfamily. Expressed in the gut of larva and adult.

It carries out the reaction a very-long-chain (3R)-3-hydroxyacyl-CoA + NADP(+) = a very-long-chain 3-oxoacyl-CoA + NADPH + H(+). The catalysed reaction is (omega-1)-methyl-(3R)-hydroxy-fatty acyl-CoA + NADP(+) = (omega-1)-methyl-3-oxo-fatty acyl-CoA + NADPH + H(+). The enzyme catalyses a 17beta-hydroxy steroid + NADP(+) = a 17-oxo steroid + NADPH + H(+). It functions in the pathway lipid metabolism; fatty acid biosynthesis. In terms of biological role, required for branched-chain fatty acid synthesis (such as (omega-1)-methyl-fatty acids). Catalyzes the reduction of the 3-keto-fatty acyl-CoA intermediate that is formed in each cycle of fatty acid elongation. Very long-chain fatty acids (VLCFAs) serve as precursors for ceramide and sphingolipids. Involved in hormone production as it metabolizes 4-androstendione (androst-4-ene-3,17-dione) into testosterone and estrone into estradiol (17beta-estradiol) in vitro, but the physiological steroid substrate is unknown. This Caenorhabditis elegans protein is Very-long-chain 3-oxooacyl-coA reductase let-767 (let-767).